Reading from the N-terminus, the 246-residue chain is NH(3)-dependent NAD(+) synthetase (246 aa).

29-36 (GLSGGIDS) provides a ligand contact to ATP. A Mg(2+)-binding site is contributed by D35. Deamido-NAD(+) is bound at residue R110. Position 130 (T130) interacts with ATP. E135 is a binding site for Mg(2+). ATP contacts are provided by K159 and S181.

The protein belongs to the NAD synthetase family. As to quaternary structure, homodimer.

The enzyme catalyses deamido-NAD(+) + NH4(+) + ATP = AMP + diphosphate + NAD(+) + H(+). It functions in the pathway cofactor biosynthesis; NAD(+) biosynthesis; NAD(+) from deamido-NAD(+) (ammonia route): step 1/1. Functionally, catalyzes the ATP-dependent amidation of deamido-NAD to form NAD. Uses ammonia as a nitrogen source. This Campylobacter jejuni subsp. jejuni serotype O:2 (strain ATCC 700819 / NCTC 11168) protein is NH(3)-dependent NAD(+) synthetase.